A 255-amino-acid chain; its full sequence is tRNA1(Val) (adenine(37)-N6)-methyltransferase (255 aa).

It belongs to the methyltransferase superfamily. tRNA (adenine-N(6)-)-methyltransferase family.

Its subcellular location is the cytoplasm. The catalysed reaction is adenosine(37) in tRNA1(Val) + S-adenosyl-L-methionine = N(6)-methyladenosine(37) in tRNA1(Val) + S-adenosyl-L-homocysteine + H(+). Specifically methylates the adenine in position 37 of tRNA(1)(Val) (anticodon cmo5UAC). The chain is tRNA1(Val) (adenine(37)-N6)-methyltransferase from Porphyromonas gingivalis (strain ATCC BAA-308 / W83).